The sequence spans 106 residues: MIISTTSQLEGRPIAEYLGVVSSESVQGIYFVRDFFARFRDFFGGRSQTLESALREAREQATEELKARARQLQADAVVGVDFEISMPSVQGGMVVVFATGTAVRLK.

This sequence belongs to the UPF0145 family.

The chain is UPF0145 protein PP_2873 from Pseudomonas putida (strain ATCC 47054 / DSM 6125 / CFBP 8728 / NCIMB 11950 / KT2440).